A 220-amino-acid chain; its full sequence is Glycerol-3-phosphate acyltransferase (220 aa).

5 helical membrane passes run 4–24, 53–73, 80–100, 116–136, and 138–158; these read LTILMIILAYLGGSLSSAVLV, VAALVVLLLDVLKGTAPVYLA, PVYLGFIGVAACLGHMYPIFF, MPIGFTMGGAVIGTWLVVLLV, and GYSSLASIITVLLSPLFTYLI. The disordered stretch occupies residues 193–220; it reads WGRQAQRRQEEVGEMDDVAQKRDERDKK. A compositionally biased stretch (basic and acidic residues) spans 210–220; sequence VAQKRDERDKK.

Belongs to the PlsY family. As to quaternary structure, probably interacts with PlsX.

The protein resides in the cell inner membrane. The enzyme catalyses an acyl phosphate + sn-glycerol 3-phosphate = a 1-acyl-sn-glycero-3-phosphate + phosphate. It participates in lipid metabolism; phospholipid metabolism. Functionally, catalyzes the transfer of an acyl group from acyl-phosphate (acyl-PO(4)) to glycerol-3-phosphate (G3P) to form lysophosphatidic acid (LPA). This enzyme utilizes acyl-phosphate as fatty acyl donor, but not acyl-CoA or acyl-ACP. This Aeromonas salmonicida (strain A449) protein is Glycerol-3-phosphate acyltransferase.